Reading from the N-terminus, the 613-residue chain is Zinc metalloproteinase-disintegrin-like MTP4 (613 aa).

An N-terminal signal peptide occupies residues 1–20 (MIEVLLVTICFTVFPYQGSS). A propeptide spanning residues 21–191 (IILESGNVND…DEPIEKISQL (171 aa)) is cleaved from the precursor. In terms of domain architecture, Peptidase M12B spans 205-401 (KYIELYVVVD…VRPQCILNKP (197 aa)). Position 208 (glutamate 208) interacts with Ca(2+). Asparagine 282 carries an N-linked (GlcNAc...) asparagine glycan. Aspartate 292 is a binding site for Ca(2+). Intrachain disulfides connect cysteine 316/cysteine 396, cysteine 356/cysteine 380, and cysteine 358/cysteine 363. The Zn(2+) site is built by histidine 341, histidine 345, and histidine 351. Ca(2+) contacts are provided by cysteine 396, asparagine 399, asparagine 414, phenylalanine 416, glutamate 418, glutamate 421, and aspartate 424. Positions 409 to 495 (PPVCGNYFVE…KCPTDSFQRN (87 aa)) constitute a Disintegrin domain. 15 disulfide bridges follow: cysteine 412–cysteine 441, cysteine 423–cysteine 436, cysteine 425–cysteine 431, cysteine 435–cysteine 458, cysteine 449–cysteine 455, cysteine 454–cysteine 480, cysteine 467–cysteine 487, cysteine 474–cysteine 506, cysteine 499–cysteine 511, cysteine 518–cysteine 568, cysteine 533–cysteine 575, cysteine 543–cysteine 577, cysteine 546–cysteine 556, cysteine 563–cysteine 601, and cysteine 595–cysteine 606. Residue asparagine 437 is glycosylated (N-linked (GlcNAc...) asparagine). Residues 473–475 (DCD) carry the D/ECD-tripeptide motif. Ca(2+) contacts are provided by aspartate 475, leucine 476, glutamate 478, and aspartate 490. Residues 561–574 (KMCGKLLCEKGNAT) are hypervariable region that may play important roles toward cell migration. Asparagine 572 carries N-linked (GlcNAc...) asparagine glycosylation.

The protein belongs to the venom metalloproteinase (M12B) family. P-III subfamily. As to quaternary structure, monomer. It depends on Zn(2+) as a cofactor. In terms of tissue distribution, expressed by the venom gland.

Its subcellular location is the secreted. Snake venom zinc metalloproteinase that may impair hemostasis in the prey. The protein is Zinc metalloproteinase-disintegrin-like MTP4 of Drysdalia coronoides (White-lipped snake).